Consider the following 251-residue polypeptide: Small ribosomal subunit protein uS2 (251 aa).

It belongs to the universal ribosomal protein uS2 family.

This chain is Small ribosomal subunit protein uS2, found in Cereibacter sphaeroides (strain ATCC 17029 / ATH 2.4.9) (Rhodobacter sphaeroides).